Consider the following 307-residue polypeptide: 4-diphosphocytidyl-2-C-methyl-D-erythritol kinase (307 aa).

The active site involves Lys9. Residue 94–104 (PIGAGLAGGSS) participates in ATP binding. Asp136 is a catalytic residue.

This sequence belongs to the GHMP kinase family. IspE subfamily.

It catalyses the reaction 4-CDP-2-C-methyl-D-erythritol + ATP = 4-CDP-2-C-methyl-D-erythritol 2-phosphate + ADP + H(+). Its pathway is isoprenoid biosynthesis; isopentenyl diphosphate biosynthesis via DXP pathway; isopentenyl diphosphate from 1-deoxy-D-xylulose 5-phosphate: step 3/6. In terms of biological role, catalyzes the phosphorylation of the position 2 hydroxy group of 4-diphosphocytidyl-2C-methyl-D-erythritol. In Synechococcus sp. (strain CC9902), this protein is 4-diphosphocytidyl-2-C-methyl-D-erythritol kinase.